The chain runs to 380 residues: MSKKEIIAMILAGGQGSRLGILTRRTAKPAVPFGGKYRIIDFTLSNCSNSGIDTVGVLTQYKPLALNSHIGIGSPWDLDRTSGGVSVLPPYMKETGGNWYKGTANAIYQNRHFIENYDPEYVVILSGDHIYKMNYLEMLDFHKKKNADATIAVFEVPLNEASRFGIMNTDEDDRINEFEEKPKKPKNNLASMGIYIFNWRFLKRFLEEDARDESSNNDFGKNIIPNMLNKKRKLYAYRFNGYWKDVGTIQSLWEANMDLLDDNNSLNIYDPKWKIYSVNPTMPPQYIACNSDVKRSLVVEGCIVLGKVYNSVLFPGVYIGRDTIITNSVIMPNVIVGNNVIIKKSIIGSNARVDDNVIVGTNDNISVVGAGSKVKESIIQ.

Residues Tyr-100, Gly-165, 180 to 181 (EK), and Ser-191 contribute to the alpha-D-glucose 1-phosphate site.

It belongs to the bacterial/plant glucose-1-phosphate adenylyltransferase family. As to quaternary structure, homotetramer.

It carries out the reaction alpha-D-glucose 1-phosphate + ATP + H(+) = ADP-alpha-D-glucose + diphosphate. It functions in the pathway glycan biosynthesis; glycogen biosynthesis. Involved in the biosynthesis of ADP-glucose, a building block required for the elongation reactions to produce glycogen. Catalyzes the reaction between ATP and alpha-D-glucose 1-phosphate (G1P) to produce pyrophosphate and ADP-Glc. In Clostridium acetobutylicum (strain ATCC 824 / DSM 792 / JCM 1419 / IAM 19013 / LMG 5710 / NBRC 13948 / NRRL B-527 / VKM B-1787 / 2291 / W), this protein is Glucose-1-phosphate adenylyltransferase.